A 515-amino-acid polypeptide reads, in one-letter code: Bifunctional purine biosynthesis protein PurH (515 aa).

The 144-residue stretch at 1–144 (MGRKALISVS…KNHKFVTIIV (144 aa)) folds into the MGS-like domain.

It belongs to the PurH family.

The catalysed reaction is (6R)-10-formyltetrahydrofolate + 5-amino-1-(5-phospho-beta-D-ribosyl)imidazole-4-carboxamide = 5-formamido-1-(5-phospho-D-ribosyl)imidazole-4-carboxamide + (6S)-5,6,7,8-tetrahydrofolate. The enzyme catalyses IMP + H2O = 5-formamido-1-(5-phospho-D-ribosyl)imidazole-4-carboxamide. It functions in the pathway purine metabolism; IMP biosynthesis via de novo pathway; 5-formamido-1-(5-phospho-D-ribosyl)imidazole-4-carboxamide from 5-amino-1-(5-phospho-D-ribosyl)imidazole-4-carboxamide (10-formyl THF route): step 1/1. The protein operates within purine metabolism; IMP biosynthesis via de novo pathway; IMP from 5-formamido-1-(5-phospho-D-ribosyl)imidazole-4-carboxamide: step 1/1. In Persephonella marina (strain DSM 14350 / EX-H1), this protein is Bifunctional purine biosynthesis protein PurH.